A 181-amino-acid chain; its full sequence is MGNVFGSLFKGLFGKREMRILMVGLDAAGKTTILYKLKLGEIVTTIPTIGFNVETVEYKNISFTVWDVGGQDKIRPLWRHYFQNTQGLIFVVDSNDRERVGEAREELMRMLAEDELRDAVLLVFANKQDLPQAMNAAEVTDKLGLHSLRNRSWYIQATCATSGDGLYEGLDWLSNQLKNRS.

Residue G2 is the site of N-myristoyl glycine attachment. The tract at residues 3 to 16 (NVFGSLFKGLFGKR) is important for the stable binding to the membranes. Residues 24-32 (GLDAAGKTT), 126-129 (NKQD), and A160 each bind GTP.

This sequence belongs to the small GTPase superfamily. Arf family. As to expression, expressed in hypodermis, intestine, spermatheca, uterus, gonadal sheath, vulva cells, pharynx muscle, body wall muscle, head neurons, ventral nerve cord.

It localises to the golgi apparatus membrane. The enzyme catalyses GTP + H2O = GDP + phosphate + H(+). With respect to regulation, alternates between an inactive GDP-bound form and an active GTP-bound form. Activated by a guanine nucleotide-exchange factor (GEF) and inactivated by GTPase-activating protein (GAP). Its function is as follows. Small GTPase involved in protein trafficking between different compartments. Modulates vesicle budding and uncoating within the Golgi complex. In its GTP-bound form, triggers the recruitment of coatomer proteins to the Golgi membrane. The hydrolysis of ARF1-bound GTP, which is mediated by ARFGAPs proteins, is required for dissociation of coat proteins from Golgi membranes and vesicles. Involved in endoplasmic reticulum dynamics during embryogenesis. Also required for adult germline function. Plays a role in cell shedding during embryogenesis probably by promoting the endocytosis of cell adhesion molecules. During neurogenesis, involved in cell autonomous Q.p neuroblast asymmetric divisions that generate one precursor cell and one apoptotic cell, probably by controlling endocytosis. Plays a role in maintaining mitochondrial morphology. The sequence is that of ADP-ribosylation factor 1-like 2 from Caenorhabditis elegans.